The chain runs to 197 residues: Tyrosine-protein phosphatase-like protein OCA2 (197 aa).

A Tyrosine-protein phosphatase domain is found at 10-160 (SPVVSTDVSL…FETNLKIPRN (151 aa)). At Ser181 the chain carries Phosphoserine.

Belongs to the protein-tyrosine phosphatase family.

The protein localises to the cytoplasm. Its function is as follows. Required for normal growth in the presence of linoleic acid hydroperoxide (LoaOOH). This Saccharomyces cerevisiae (strain ATCC 204508 / S288c) (Baker's yeast) protein is Tyrosine-protein phosphatase-like protein OCA2 (OCA2).